A 689-amino-acid chain; its full sequence is MTDKTFLVEIGTEELPPKALRNLAESFAANFTAELDAANLAHGDVSWFAAPRRLALKVARLSASQPDREVEKRGPAISQAFDAEGKPTKAAEGWARGCGITVEQAERLTTDKGEWLLYRAHAKGEQAQALLAGMVSTALSKLPIPKLMRWSDKETQFVRPVHTVTLLLGEELIPGQVLGIHSARTIRGHRFMGEAEFTIDNAEQYPQILLERGKVVADYDARKAKIKADAEDAARKIGGNADLSDSLLEEVTSLVEWPVVLTAKFEEKFLAVPSEALVYTMKGDQKYFPVYDNSGNLLPHFIFVANIESKDPQQIISGNEKVVRPRLADAEFFFNTDRKKRLEDHLPRLETVLFQQQLGSLRDKTDRIQALAGWVASQIGADVNHATRAGLLSKCDLMTNMVFEFTDTQGVMGMHYARHDGEAEDVAVALNEQYQPRFAGDELPSSAVACALAIADKMDSLAGIFGIGQHPKGDKDPFALRRAALGVLRIIVEKRLPLDLQTLTEEAVRLYGTKLTNTKAVDEVIEFMLGRFRAWYQEEGHSVDTIQAVLARRPTRPADFDARVKAVSHFRSLDAAAALAAANKRVSNILAKSTDKLNESVNAAVLKDAAEITLATHLVVLRDKLTPLFAEGRYQEALVELASLREPVDAFFDQVMVMAEDEQVRVNRLTLLSQLRELFLQVADISVLQ.

The protein belongs to the class-II aminoacyl-tRNA synthetase family. As to quaternary structure, tetramer of two alpha and two beta subunits.

It localises to the cytoplasm. It catalyses the reaction tRNA(Gly) + glycine + ATP = glycyl-tRNA(Gly) + AMP + diphosphate. This is Glycine--tRNA ligase beta subunit from Pectobacterium atrosepticum (strain SCRI 1043 / ATCC BAA-672) (Erwinia carotovora subsp. atroseptica).